Consider the following 1191-residue polypeptide: Laminin subunit gamma-2 (1191 aa).

The first 21 residues, Met-1–Ala-21, serve as a signal peptide directing secretion. Intrachain disulfides connect Cys-28-Cys-37, Cys-30-Cys-53, Cys-56-Cys-65, Cys-68-Cys-81, Cys-84-Cys-96, Cys-86-Cys-102, Cys-104-Cys-113, Cys-116-Cys-128, Cys-139-Cys-150, Cys-141-Cys-155, Cys-157-Cys-166, and Cys-169-Cys-184. 3 Laminin EGF-like domains span residues Cys-28–Pro-83, Cys-84–Arg-130, and Cys-139–Gln-186. The Laminin EGF-like 4; first part domain occupies Cys-187–Cys-196. Residues Gln-213–Arg-381 enclose the Laminin IV type A domain. 2 N-linked (GlcNAc...) asparagine glycosylation sites follow: Asn-342 and Asn-362. The region spanning Cys-382–Pro-415 is the Laminin EGF-like 4; second part domain. Laminin EGF-like domains are found at residues Cys-416 to Pro-461, Cys-462 to Arg-516, and Cys-517 to Ala-572. 11 cysteine pairs are disulfide-bonded: Cys-462-Cys-470, Cys-464-Cys-481, Cys-484-Cys-493, Cys-496-Cys-514, Cys-517-Cys-531, Cys-519-Cys-538, Cys-541-Cys-550, Cys-553-Cys-570, Cys-573-Cys-585, Cys-575-Cys-591, and Cys-593-Cys-602. N-linked (GlcNAc...) asparagine glycosylation is present at Asn-526. The 30-residue stretch at Cys-573–Cys-602 folds into the Laminin EGF-like 8; truncated domain. Residues Arg-586–Asp-588 carry the Cell attachment site motif. The domain II and I stretch occupies residues Asp-603–Gln-1191. Coiled-coil stretches lie at residues Ala-612–Leu-710 and Leu-759–Asp-786. A glycan (O-linked (Xyl...) (chondroitin sulfate) serine) is linked at Ser-805. Asn-941 is a glycosylation site (N-linked (GlcNAc...) asparagine). Positions Glu-946–Leu-996 form a coiled coil. Asn-1032 carries an N-linked (GlcNAc...) asparagine glycan. Residues Leu-1139–Leu-1178 adopt a coiled-coil conformation.

In terms of assembly, laminin is a complex glycoprotein, consisting of three different polypeptide chains (alpha, beta, gamma), which are bound to each other by disulfide bonds into a cross-shaped molecule comprising one long and three short arms with globules at each end. Gamma-2 is a subunit of laminin-5 (laminin-332 or epiligrin/kalinin/nicein). Binds to fibulin-1, fibulin-1c, fibulin-2 and nidogen. Post-translationally, O-glycosylated; contains chondroitin sulfate (CS). In terms of tissue distribution, epithelial cells of many tissues, particularly high levels in tongue, hair follicles and kidney. Basement membranes of the collecting tubules of kidney and pancreas.

The protein resides in the secreted. The protein localises to the extracellular space. It is found in the extracellular matrix. It localises to the basement membrane. In terms of biological role, binding to cells via a high affinity receptor, laminin is thought to mediate the attachment, migration and organization of cells into tissues during embryonic development by interacting with other extracellular matrix components. This is Laminin subunit gamma-2 (Lamc2) from Mus musculus (Mouse).